A 180-amino-acid chain; its full sequence is Peptidyl-tRNA hydrolase (180 aa).

TRNA is bound at residue tyrosine 13. Histidine 18 functions as the Proton acceptor in the catalytic mechanism. The tRNA site is built by tyrosine 58, asparagine 60, and asparagine 100.

It belongs to the PTH family. Monomer.

Its subcellular location is the cytoplasm. It carries out the reaction an N-acyl-L-alpha-aminoacyl-tRNA + H2O = an N-acyl-L-amino acid + a tRNA + H(+). In terms of biological role, hydrolyzes ribosome-free peptidyl-tRNAs (with 1 or more amino acids incorporated), which drop off the ribosome during protein synthesis, or as a result of ribosome stalling. Its function is as follows. Catalyzes the release of premature peptidyl moieties from peptidyl-tRNA molecules trapped in stalled 50S ribosomal subunits, and thus maintains levels of free tRNAs and 50S ribosomes. The polypeptide is Peptidyl-tRNA hydrolase (Fervidobacterium nodosum (strain ATCC 35602 / DSM 5306 / Rt17-B1)).